The chain runs to 202 residues: Venom allergen 5 (202 aa).

3 cysteine pairs are disulfide-bonded: cysteine 4–cysteine 16, cysteine 8–cysteine 101, and cysteine 26–cysteine 94. Tyrosine 107 bears the Phosphotyrosine mark. Lysine 138 carries N-linked (Glc) (glycation) lysine glycosylation. Cysteine 168 and cysteine 185 are joined by a disulfide.

It belongs to the CRISP family. Expressed by the venom gland.

Its subcellular location is the secreted. In terms of biological role, does not show toxicity when intravenously injected into mice tail. The polypeptide is Venom allergen 5 (Vespa velutina (Asian yellow-legged hornet)).